The chain runs to 119 residues: Large ribosomal subunit protein bL20 (119 aa).

It belongs to the bacterial ribosomal protein bL20 family.

Its function is as follows. Binds directly to 23S ribosomal RNA and is necessary for the in vitro assembly process of the 50S ribosomal subunit. It is not involved in the protein synthesizing functions of that subunit. This is Large ribosomal subunit protein bL20 from Geobacillus kaustophilus (strain HTA426).